A 216-amino-acid polypeptide reads, in one-letter code: Pyrophosphatase PpaX (216 aa).

The Nucleophile role is filled by Asp9.

This sequence belongs to the HAD-like hydrolase superfamily. PpaX family. Mg(2+) serves as cofactor.

It carries out the reaction diphosphate + H2O = 2 phosphate + H(+). Hydrolyzes pyrophosphate formed during P-Ser-HPr dephosphorylation by HPrK/P. Might play a role in controlling the intracellular pyrophosphate pool. The protein is Pyrophosphatase PpaX of Bacillus anthracis (strain CDC 684 / NRRL 3495).